The primary structure comprises 396 residues: Serine/threonine-protein kinase 32A (396 aa).

A lipid anchor (N-myristoyl glycine) is attached at Gly-2. The region spanning 23 to 281 (FEILRAIGKG…LSDVQNFPYM (259 aa)) is the Protein kinase domain. ATP-binding positions include 29–37 (IGKGSFGKV) and Lys-52. Catalysis depends on Asp-146, which acts as the Proton acceptor. The segment at 373–396 (KRQPNLALEQTKDPQGEDGQNNNL) is disordered.

Belongs to the protein kinase superfamily. Ser/Thr protein kinase family. Mg(2+) is required as a cofactor.

The protein resides in the cell membrane. It catalyses the reaction L-seryl-[protein] + ATP = O-phospho-L-seryl-[protein] + ADP + H(+). The enzyme catalyses L-threonyl-[protein] + ATP = O-phospho-L-threonyl-[protein] + ADP + H(+). In Homo sapiens (Human), this protein is Serine/threonine-protein kinase 32A (STK32A).